The primary structure comprises 1113 residues: Tudor domain-containing protein 7 (1113 aa).

HTH OST-type domains follow at residues 3-76 and 249-318; these read EADL…YAVA and KMDE…YPAK. Residues 320–334 are compositionally biased toward basic and acidic residues; sequence EQPLRSDQDPEKERP. The tract at residues 320-352 is disordered; the sequence is EQPLRSDQDPEKERPPPPPAPRQEVPSKGSPAV. Positions 352-421 constitute an HTH OST-type 3 domain; sequence VMPDVKEKVA…TQKAILYAKL (70 aa). 2 Tudor domains span residues 528-585 and 718-775; these read TVHV…FCSL and LPFC…FLQE. Residues 873 to 895 form a disordered region; sequence SSPGNRNASTPAPGSPAESLRKS. Residue Ser-874 is modified to Phosphoserine. Residues 875 to 884 show a composition bias toward polar residues; the sequence is PGNRNASTPA. The tract at residues 876 to 1113 is interaction with CDK17; it reads GNRNASTPAP…QYLVELSKAN (238 aa). Positions 908–1113 are interaction with CABLES1; that stretch reads TSSFSLEELP…QYLVELSKAN (206 aa).

This sequence belongs to the TDRD7 family. In terms of assembly, found in a mRNP complex, at least composed of TDRD1, TDRD6, TDRD7 and DDX4. Found in a complex containing CABLES1, CDK16 and CDK17. Interacts with CABLES1, CDK17 and PIWIL1. In terms of tissue distribution, expressed in brain and testis.

The protein resides in the cytoplasm. Its function is as follows. Component of specific cytoplasmic RNA granules involved in post-transcriptional regulation of specific genes: probably acts by binding to specific mRNAs and regulating their translation. Required for lens transparency during lens development, by regulating translation of genes such as CRYBB3 and HSPB1 in the developing lens. Also required during spermatogenesis. The polypeptide is Tudor domain-containing protein 7 (Tdrd7) (Rattus norvegicus (Rat)).